Reading from the N-terminus, the 882-residue chain is Formin-like protein 9 (882 aa).

Positions 1–19 are cleaved as a signal peptide; sequence MGMAMRCVLVLFSVSPVLL. The disordered stretch occupies residues 67 to 92; it reads SRGRRHKRYSEAPAPAPAPVPAHQAR. Residues 138–158 form a helical membrane-spanning segment; it reads IVALGVVGLCLVVLGVVIAAF. 3 disordered regions span residues 178–202, 293–316, and 401–471; these read RHGS…PDPL, THDS…LSPK, and TMTN…PLPR. Residues 298 to 308 are compositionally biased toward low complexity; sequence SDSSYQSLSPD. Residues 427-441 are compositionally biased toward pro residues; sequence KPAPPPPPQKNPPPN. Residues 462–882 form the FH2 domain; sequence VGKDGSPLPR…QTLNLVLPLK (421 aa).

Belongs to the formin-like family. Class-I subfamily.

Its subcellular location is the membrane. The chain is Formin-like protein 9 (FH9) from Oryza sativa subsp. japonica (Rice).